Here is a 223-residue protein sequence, read N- to C-terminus: MGQKVHPYGFRLGYTKPWKSRWFIERDYDKLLLEDVKLKAELKEKLKSAGVSSIEVERPGNKLRIIIRTARPGIIIGRKGAEIDKLKGELQKRTNREVYIDIQEVHKPELDAQLVAESIALQLEKRVGFRRAMRKSVDSALRFGCKGIKVRVSGRLNGNEIARSEWYLQGRLPLHTLRADIDYGFAEARTTYGVIGVKAWVYKGEILPAAKKREPQVATAGNF.

The 69-residue stretch at 38 to 106 (LKAELKEKLK…EVYIDIQEVH (69 aa)) folds into the KH type-2 domain.

The protein belongs to the universal ribosomal protein uS3 family. As to quaternary structure, part of the 30S ribosomal subunit. Forms a tight complex with proteins S10 and S14.

Functionally, binds the lower part of the 30S subunit head. Binds mRNA in the 70S ribosome, positioning it for translation. The sequence is that of Small ribosomal subunit protein uS3 from Koribacter versatilis (strain Ellin345).